A 544-amino-acid polypeptide reads, in one-letter code: Chaperonin GroEL 2 (544 aa).

Residues 29–32, 86–90, G413, 479–481, and D495 each bind ATP; these read TLGP, DGTTT, and NAA.

It belongs to the chaperonin (HSP60) family. As to quaternary structure, forms a cylinder of 14 subunits composed of two heptameric rings stacked back-to-back. Interacts with the co-chaperonin GroES.

The protein localises to the cytoplasm. The catalysed reaction is ATP + H2O + a folded polypeptide = ADP + phosphate + an unfolded polypeptide.. Together with its co-chaperonin GroES, plays an essential role in assisting protein folding. The GroEL-GroES system forms a nano-cage that allows encapsulation of the non-native substrate proteins and provides a physical environment optimized to promote and accelerate protein folding. In Trichodesmium erythraeum (strain IMS101), this protein is Chaperonin GroEL 2.